Reading from the N-terminus, the 488-residue chain is Probable malate:quinone oxidoreductase (488 aa).

The protein belongs to the MQO family. The cofactor is FAD.

The catalysed reaction is (S)-malate + a quinone = a quinol + oxaloacetate. It functions in the pathway carbohydrate metabolism; tricarboxylic acid cycle; oxaloacetate from (S)-malate (quinone route): step 1/1. The protein is Probable malate:quinone oxidoreductase of Neisseria meningitidis serogroup A / serotype 4A (strain DSM 15465 / Z2491).